We begin with the raw amino-acid sequence, 465 residues long: Cysteine--tRNA ligase 2 (465 aa).

Cys-30 provides a ligand contact to Zn(2+). Positions 32-42 (ITVYDYCHVGH) match the 'HIGH' region motif. Residues Cys-214, His-239, and Glu-243 each coordinate Zn(2+). Positions 271 to 275 (KMSKS) match the 'KMSKS' region motif. Lys-274 contacts ATP.

Belongs to the class-I aminoacyl-tRNA synthetase family. As to quaternary structure, monomer. Zn(2+) is required as a cofactor.

The protein localises to the cytoplasm. It carries out the reaction tRNA(Cys) + L-cysteine + ATP = L-cysteinyl-tRNA(Cys) + AMP + diphosphate. The protein is Cysteine--tRNA ligase 2 of Burkholderia lata (strain ATCC 17760 / DSM 23089 / LMG 22485 / NCIMB 9086 / R18194 / 383).